We begin with the raw amino-acid sequence, 81 residues long: Defensin-like protein 144 (81 aa).

Residues 1-24 (MKNSFRFSFTVITTFIICVLVSGA) form the signal peptide. Intrachain disulfides connect Cys-30–Cys-74, Cys-42–Cys-61, Cys-47–Cys-69, and Cys-51–Cys-71.

The protein belongs to the DEFL family.

It is found in the secreted. This is Defensin-like protein 144 (LCR10) from Arabidopsis thaliana (Mouse-ear cress).